We begin with the raw amino-acid sequence, 158 residues long: 6,7-dimethyl-8-ribityllumazine synthase (158 aa).

Residues F22, 57 to 59 (AVE), and 81 to 83 (AVI) contribute to the 5-amino-6-(D-ribitylamino)uracil site. 86–87 (GT) contributes to the (2S)-2-hydroxy-3-oxobutyl phosphate binding site. H89 serves as the catalytic Proton donor. F114 is a 5-amino-6-(D-ribitylamino)uracil binding site. R128 provides a ligand contact to (2S)-2-hydroxy-3-oxobutyl phosphate.

The protein belongs to the DMRL synthase family. As to quaternary structure, forms an icosahedral capsid composed of 60 subunits, arranged as a dodecamer of pentamers.

The enzyme catalyses (2S)-2-hydroxy-3-oxobutyl phosphate + 5-amino-6-(D-ribitylamino)uracil = 6,7-dimethyl-8-(1-D-ribityl)lumazine + phosphate + 2 H2O + H(+). It functions in the pathway cofactor biosynthesis; riboflavin biosynthesis; riboflavin from 2-hydroxy-3-oxobutyl phosphate and 5-amino-6-(D-ribitylamino)uracil: step 1/2. Its function is as follows. Catalyzes the formation of 6,7-dimethyl-8-ribityllumazine by condensation of 5-amino-6-(D-ribitylamino)uracil with 3,4-dihydroxy-2-butanone 4-phosphate. This is the penultimate step in the biosynthesis of riboflavin. The polypeptide is 6,7-dimethyl-8-ribityllumazine synthase (Shewanella pealeana (strain ATCC 700345 / ANG-SQ1)).